A 338-amino-acid chain; its full sequence is MTKQKVAILGPGSWGTALSQVLNDNGHDVRLWGNIPDQIEEINTKHTNRHYFKDIVLDKNITATLDLGQALSDVDAVLFVVPTKVTRLVARQVAAILDHKVVVMHASKGLEPETHERLSTILEEEIPAHFRSEVVVVSGPSHAEETIVRDITLITAASKDIEAAKYVQSLFSNHYFRLYTNTDVIGVETAGALKNIIAVGAGALHGLGYGDNAKAAVITRGLAEITRLGVKLGADPLTYSGLSGVGDLIVTGTSVHSRNWRAGAALGRGEKLEDIERNMGMVIEGIATTKVAYEIAQDLGVYMPITTAIYKSIYEGADIKESILGMMSNEFRSENEWH.

Residues serine 13, tryptophan 14, and lysine 108 each coordinate NADPH. Residues lysine 108, glycine 139, and serine 141 each contribute to the sn-glycerol 3-phosphate site. Alanine 143 contributes to the NADPH binding site. Sn-glycerol 3-phosphate contacts are provided by lysine 194, aspartate 247, serine 257, arginine 258, and asparagine 259. The active-site Proton acceptor is the lysine 194. Arginine 258 provides a ligand contact to NADPH. Residues valine 282 and glutamate 284 each contribute to the NADPH site.

This sequence belongs to the NAD-dependent glycerol-3-phosphate dehydrogenase family.

The protein localises to the cytoplasm. The catalysed reaction is sn-glycerol 3-phosphate + NAD(+) = dihydroxyacetone phosphate + NADH + H(+). It catalyses the reaction sn-glycerol 3-phosphate + NADP(+) = dihydroxyacetone phosphate + NADPH + H(+). It participates in membrane lipid metabolism; glycerophospholipid metabolism. Functionally, catalyzes the reduction of the glycolytic intermediate dihydroxyacetone phosphate (DHAP) to sn-glycerol 3-phosphate (G3P), the key precursor for phospholipid synthesis. The sequence is that of Glycerol-3-phosphate dehydrogenase [NAD(P)+] from Streptococcus pyogenes serotype M12 (strain MGAS9429).